Reading from the N-terminus, the 135-residue chain is Transcription antitermination protein NusB (135 aa).

This sequence belongs to the NusB family.

Involved in transcription antitermination. Required for transcription of ribosomal RNA (rRNA) genes. Binds specifically to the boxA antiterminator sequence of the ribosomal RNA (rrn) operons. This is Transcription antitermination protein NusB from Lacticaseibacillus paracasei (strain ATCC 334 / BCRC 17002 / CCUG 31169 / CIP 107868 / KCTC 3260 / NRRL B-441) (Lactobacillus paracasei).